The chain runs to 109 residues: B melanoma antigen 2 (109 aa).

A signal peptide spans 1–17 (MAAGVVFLALSAQLLQA).

It belongs to the BAGE family. As to expression, not expressed in normal tissues except in testis. Expressed in 22% of melanomas, in bladder and lung carcinomas.

It is found in the secreted. Its function is as follows. Unknown. Candidate gene encoding tumor antigens. This Homo sapiens (Human) protein is B melanoma antigen 2 (BAGE2).